A 584-amino-acid chain; its full sequence is uncharacterized protein (584 aa).

Disordered regions lie at residues 123-156 (LSCSSSSPSSSSSSSSSSPRLISTPPIISTPSSP), 209-264 (KIVT…INGG), and 355-479 (STQL…ITPT). 2 stretches are compositionally biased toward low complexity: residues 237–260 (SLSFKSPCSSPSSSSSSTTTPKSS) and 366–376 (SISAATTTTIT). 2 stretches are compositionally biased toward polar residues: residues 377–388 (PHNNNSTMTTKT) and 395–419 (DTSNLSTPKSTSSTINKAFTTSTTP). Positions 425–479 (MSMTPLSSSSSSSTTPSKFINPLPSSSSKTTTTITNSKRLSTLSKPSPITPITPT) are enriched in low complexity.

This is an uncharacterized protein from Dictyostelium discoideum (Social amoeba).